Consider the following 474-residue polypeptide: Cysteine--tRNA ligase (474 aa).

Residue C29 coordinates Zn(2+). A 'HIGH' region motif is present at residues I31 to H41. The Zn(2+) site is built by C215, H240, and E244. The 'KMSKS' region signature appears at K273–S277. K276 provides a ligand contact to ATP.

This sequence belongs to the class-I aminoacyl-tRNA synthetase family. Zn(2+) is required as a cofactor.

The protein resides in the cytoplasm. It carries out the reaction tRNA(Cys) + L-cysteine + ATP = L-cysteinyl-tRNA(Cys) + AMP + diphosphate. The polypeptide is Cysteine--tRNA ligase (Pyrobaculum aerophilum (strain ATCC 51768 / DSM 7523 / JCM 9630 / CIP 104966 / NBRC 100827 / IM2)).